The chain runs to 278 residues: Potassium/proton antiporter CemA (278 aa).

Helical transmembrane passes span 61-81 (LIVLVVFPVVVHQVSKNFIIG), 155-175 (AIKNILADSISISVFILLIVL), 203-223 (IILFTDMFIGFHSPHGWEVVI), and 238-258 (FIFLFIATFPVSLDTVFKYWI).

It belongs to the CemA family.

The protein resides in the plastid. Its subcellular location is the chloroplast inner membrane. It carries out the reaction K(+)(in) + H(+)(out) = K(+)(out) + H(+)(in). Functionally, contributes to K(+)/H(+) antiport activity by supporting proton efflux to control proton extrusion and homeostasis in chloroplasts in a light-dependent manner to modulate photosynthesis. Prevents excessive induction of non-photochemical quenching (NPQ) under continuous-light conditions. Indirectly promotes efficient inorganic carbon uptake into chloroplasts. The sequence is that of Potassium/proton antiporter CemA from Cyanidium caldarium (Red alga).